Here is a 186-residue protein sequence, read N- to C-terminus: Transcription factor HES-3 (186 aa).

Residues 1-49 (MEKKRRARINVSLEQLKSLLEKHYSHQIRKRKLEKADILELSVKYMRSL) enclose the bHLH domain. The Orange domain maps to 65 to 99 (QPSGFRSCLPGVSQLLRRGDEVGSGLRCPLVPESA). A disordered region spans residues 128 to 186 (APAAGGPRSPPPLLLLPESLPGSSASVPPPQPASSRCAESPGLGLRVWRPWGSPGDDLN). The span at 142-153 (LLPESLPGSSAS) shows a compositional bias: low complexity. The WRPW motif motif lies at 175–178 (WRPW).

As to quaternary structure, transcription repression requires formation of a complex with a corepressor protein of the Groucho/TLE family.

The protein localises to the nucleus. In terms of biological role, transcriptional repressor of genes that require a bHLH protein for their transcription. In Homo sapiens (Human), this protein is Transcription factor HES-3 (HES3).